The following is a 944-amino-acid chain: Neutral alpha-glucosidase AB (944 aa).

An N-terminal signal peptide occupies residues 1 to 32; that stretch reads MAAIAAVAARRRRSWLSLVLAYLGVCLGITLA. Cysteines 41 and 47 form a disulfide. Position 52 is a phosphoserine (S52). N-linked (GlcNAc...) asparagine glycosylation occurs at N97. The tract at residues 180-238 is disordered; it reads HQRAPRVPQESKDPAEGNGAQPEATPGDGDKPEETQEKAEKDEPGAWEETFKTHSDSKP. A compositionally biased stretch (basic and acidic residues) spans 207-236; sequence DGDKPEETQEKAEKDEPGAWEETFKTHSDS. Positions 283 and 429 each coordinate substrate. The active-site Nucleophile is D542. Residue R602 participates in substrate binding. D618 functions as the Proton donor in the catalytic mechanism. Cysteines 633 and 644 form a disulfide. A substrate-binding site is contributed by H676.

The protein belongs to the glycosyl hydrolase 31 family. As to quaternary structure, heterodimer of a catalytic alpha subunit (GANAB) and a beta subunit (PRKCSH). Binds glycosylated PTPRC.

Its subcellular location is the endoplasmic reticulum. The protein resides in the golgi apparatus. It localises to the melanosome. It catalyses the reaction N(4)-(alpha-D-Glc-(1-&gt;3)-alpha-D-Man-(1-&gt;2)-alpha-D-Man-(1-&gt;2)-alpha-D-Man-(1-&gt;3)-[alpha-D-Man-(1-&gt;2)-alpha-D-Man-(1-&gt;3)-[alpha-D-Man-(1-&gt;2)-alpha-D-Man-(1-&gt;6)]-alpha-D-Man-(1-&gt;6)]-beta-D-Man-(1-&gt;4)-beta-D-GlcNAc-(1-&gt;4)-beta-D-GlcNAc)-L-asparaginyl-[protein] + H2O = N(4)-(alpha-D-Man-(1-&gt;2)-alpha-D-Man-(1-&gt;2)-alpha-D-Man-(1-&gt;3)-[alpha-D-Man-(1-&gt;2)-alpha-D-Man-(1-&gt;3)-[alpha-D-Man-(1-&gt;2)-alpha-D-Man-(1-&gt;6)]-alpha-D-Man-(1-&gt;6)]-beta-D-Man-(1-&gt;4)-beta-D-GlcNAc-(1-&gt;4)-beta-D-GlcNAc)-L-asparaginyl-[protein] (N-glucan mannose isomer 9A1,2,3B1,2,3) + beta-D-glucose. The catalysed reaction is N(4)-(alpha-D-Glc-(1-&gt;3)-alpha-D-Glc-(1-&gt;3)-alpha-D-Man-(1-&gt;2)-alpha-D-Man-(1-&gt;2)-alpha-D-Man-(1-&gt;3)-[alpha-D-Man-(1-&gt;2)-alpha-D-Man-(1-&gt;3)-[alpha-D-Man-(1-&gt;2)-alpha-D-Man-(1-&gt;6)]-alpha-D-Man-(1-&gt;6)]-beta-D-Man-(1-&gt;4)-beta-D-GlcNAc-(1-&gt;4)-beta-D-GlcNAc)-L-asparaginyl-[protein] + H2O = N(4)-(alpha-D-Glc-(1-&gt;3)-alpha-D-Man-(1-&gt;2)-alpha-D-Man-(1-&gt;2)-alpha-D-Man-(1-&gt;3)-[alpha-D-Man-(1-&gt;2)-alpha-D-Man-(1-&gt;3)-[alpha-D-Man-(1-&gt;2)-alpha-D-Man-(1-&gt;6)]-alpha-D-Man-(1-&gt;6)]-beta-D-Man-(1-&gt;4)-beta-D-GlcNAc-(1-&gt;4)-beta-D-GlcNAc)-L-asparaginyl-[protein] + beta-D-glucose. The protein operates within glycan metabolism; N-glycan metabolism. Functionally, catalytic subunit of glucosidase II that cleaves sequentially the 2 innermost alpha-1,3-linked glucose residues from the Glc(2)Man(9)GlcNAc(2) oligosaccharide precursor of immature glycoproteins. Required for PKD1/Polycystin-1 and PKD2/Polycystin-2 maturation and localization to the cell surface and cilia. The chain is Neutral alpha-glucosidase AB from Mus musculus (Mouse).